The chain runs to 309 residues: Taste receptor type 2 member 46 (309 aa).

Met-1 is a topological domain (extracellular). Residues 2–22 (ITFLPIIFSILIVVTFVIGNF) form a helical membrane-spanning segment. Topologically, residues 23-46 (ANGFIALANSIEWFKRQKISFADQ) are cytoplasmic. Residues 47-67 (ILTALAVSRVGLLWVLLLNWY) traverse the membrane as a helical segment. The Extracellular segment spans residues 68–86 (ATELNPAFYSIEVRITAYN). A helical transmembrane segment spans residues 87-107 (LWAVINHFSNWLATSLSIFYL). The Cytoplasmic segment spans residues 108 to 126 (LKIANFSNLIFLCLKRRVK). The helical transmembrane segment at 127–147 (SVVLVILLGPLLFLVCHLFVI) threads the bilayer. Residues 148 to 178 (NMNQIIWTKEYEGNMTWKIKLRSAMYLSNTT) are Extracellular-facing. Residues Asn-161 and Asn-176 are each glycosylated (N-linked (GlcNAc...) asparagine). A helical transmembrane segment spans residues 179-199 (VTILANLVPFTLTLISFLLLI). The Cytoplasmic segment spans residues 200–229 (CSLCKHLEKMQLHGKGSQDPSMKVHIKALQ). A helical transmembrane segment spans residues 230–250 (TVTSFLLLCAIYFLSIIMSVW). Residues 251–259 (SFESLENKP) lie on the Extracellular side of the membrane. Residues 260–280 (VFMFCEAITFSYPSTHPFILI) form a helical membrane-spanning segment. The Cytoplasmic segment spans residues 281 to 309 (WGNKKLKQTFLSVLWHVRYWVKGEKPSXP).

This sequence belongs to the G-protein coupled receptor T2R family.

It localises to the membrane. Its subcellular location is the cell projection. The protein localises to the cilium membrane. Receptor that may play a role in the perception of bitterness and is gustducin-linked. May play a role in sensing the chemical composition of the gastrointestinal content. The activity of this receptor may stimulate alpha gustducin, mediate PLC-beta-2 activation and lead to the gating of TRPM5. In airway epithelial cells, binding of bitter compounds increases the intracellular calcium ion concentration and stimulates ciliary beat frequency. This Pan troglodytes (Chimpanzee) protein is Taste receptor type 2 member 46 (TAS2R46).